Reading from the N-terminus, the 387-residue chain is MEKVVIVDAIRTPMGRSKGGAFRHVRAEDLSAHLMRSLLARNPALEASAIDDIYWGCVQQTLEQGFNIARNASLLAEIPHSVPAVTVNRLCGSSMQALHDAARMIMTGDAQVCMVGGVEHMGHVPMSHGVDFHPGMSRNVAKAAGMMGLTAEMLSRMHGISREMQDQFAARSHARAWAATQSGAFKNEILPTGGHDVDGVLKQYYYDEVIRPETTVEALSALRPAFDPVTGTVTAGTSSALSDGAAAMLVMSESRARELGLTPRARIRSMAVVGCDPSIMGYGPVPASKLALKKAGLTASEIDVFEMNEAFAAQILPCIKDLGLMEQIDEKINLNGGAIALGHPLGCSGARISTTLINLMERKDAQFGLATMCIGLGQGIATVFERV.

The active-site Acyl-thioester intermediate is cysteine 91. Catalysis depends on proton acceptor residues histidine 343 and cysteine 373.

Belongs to the thiolase-like superfamily. Thiolase family. As to quaternary structure, heterotetramer of two alpha chains (FadB) and two beta chains (FadA).

Its subcellular location is the cytoplasm. It catalyses the reaction an acyl-CoA + acetyl-CoA = a 3-oxoacyl-CoA + CoA. Its pathway is lipid metabolism; fatty acid beta-oxidation. Functionally, catalyzes the final step of fatty acid oxidation in which acetyl-CoA is released and the CoA ester of a fatty acid two carbons shorter is formed. This is 3-ketoacyl-CoA thiolase from Enterobacter sp. (strain 638).